The sequence spans 297 residues: Zinc finger protein 784 (297 aa).

A compositionally biased stretch (pro residues) spans 1-12 (MAAARPDPPIPS). A disordered region spans residues 1–39 (MAAARPDPPIPSSPTRESPSPEPPDLVLVPDGRPVTPPG). Ser-13 bears the Phosphoserine mark. C2H2-type zinc fingers lie at residues 64-86 (FHCALCPAAFRLVSELLFHEHGH), 100-122 (SRCHVCGHSCPGPASLRAHYSLH), and 128-150 (YRCSLCPRAFKALAPLLRHQHRH). Residues 149-175 (RHGVEPGTSERLLPTTTTGQPNSRVAQ) form a disordered region. Polar residues predominate over residues 162-173 (PTTTTGQPNSRV). 3 C2H2-type zinc fingers span residues 195 to 217 (FACRFCAKPFRRSSDMRDHERVH), 223 to 245 (YHCSICGKGFTQSSVLSGHARIH), and 251 to 273 (FRCMLCDRTFNNSSNFRKHQRTH). Residues 268–297 (KHQRTHFHGPGSGVGESRGQLRSSSVSQES) form a disordered region. Residues 287-297 (QLRSSSVSQES) are compositionally biased toward polar residues.

The protein belongs to the krueppel C2H2-type zinc-finger protein family.

The protein localises to the nucleus. Its function is as follows. May be involved in transcriptional regulation. This is Zinc finger protein 784 (Znf784) from Mus musculus (Mouse).